The sequence spans 448 residues: Probable glycine dehydrogenase (decarboxylating) subunit 1 (448 aa).

This sequence belongs to the GcvP family. N-terminal subunit subfamily. The glycine cleavage system is composed of four proteins: P, T, L and H. In this organism, the P 'protein' is a heterodimer of two subunits.

It catalyses the reaction N(6)-[(R)-lipoyl]-L-lysyl-[glycine-cleavage complex H protein] + glycine + H(+) = N(6)-[(R)-S(8)-aminomethyldihydrolipoyl]-L-lysyl-[glycine-cleavage complex H protein] + CO2. In terms of biological role, the glycine cleavage system catalyzes the degradation of glycine. The P protein binds the alpha-amino group of glycine through its pyridoxal phosphate cofactor; CO(2) is released and the remaining methylamine moiety is then transferred to the lipoamide cofactor of the H protein. The polypeptide is Probable glycine dehydrogenase (decarboxylating) subunit 1 (Staphylococcus aureus (strain COL)).